We begin with the raw amino-acid sequence, 431 residues long: STE20-related kinase adapter protein alpha (431 aa).

Residues Ser2 and Ser46 each carry the phosphoserine modification. The 311-residue stretch at 69 to 379 folds into the Protein kinase domain; it reads YELLTVIGKG…ASTLLNHSFF (311 aa). A disordered region spans residues 310 to 347; sequence LTMSPSRSVANSGLSDSLTTSTPRPSNGDSPSHPYHRT. The segment covering 312–339 has biased composition (polar residues); that stretch reads MSPSRSVANSGLSDSLTTSTPRPSNGDS. Residues Thr329 and Thr401 each carry the phosphothreonine; by LKB1 modification. At Thr419 the chain carries Phosphothreonine.

It belongs to the protein kinase superfamily. STE Ser/Thr protein kinase family. STE20 subfamily. In terms of assembly, component of a trimeric complex composed of STK11/LKB1, STRAD (STRADA or STRADB) and CAB39/MO25 (CAB39/MO25alpha or CAB39L/MO25beta): the complex tethers STK11/LKB1 in the cytoplasm and stimulates its catalytic activity.

The protein resides in the nucleus. It localises to the cytoplasm. Its function is as follows. Pseudokinase which, in complex with CAB39/MO25 (CAB39/MO25alpha or CAB39L/MO25beta), binds to and activates STK11/LKB1. Adopts a closed conformation typical of active protein kinases and binds STK11/LKB1 as a pseudosubstrate, promoting conformational change of STK11/LKB1 in an active conformation. In Pongo abelii (Sumatran orangutan), this protein is STE20-related kinase adapter protein alpha (STRADA).